The sequence spans 430 residues: MAQILAASPTCQMRVPKHSSVIASSSKLWSSVVLKQKKQSNNKVRGFRVLALQSDNSTVNRVETLLNLDTKPYSDRIIAEYIWIGGSGIDLRSKSRTIEKPVEDPSELPKWNYDGSSTGQAPGEDSEVILYPQAIFRDPFRGGNNILVICDTWTPAGEPIPTNKRAKAAEIFSNKKVSGEVPWFGIEQEYTLLQQNVKWPLGWPVGAFPGPQGPYYCGVGADKIWGRDISDAHYKACLYAGINISGTNGEVMPGQWEFQVGPSVGIDAGDHVWCARYLLERITEQAGVVLTLDPKPIEGDWNGAGCHTNYSTKSMREEGGFEVIKKAILNLSLRHKEHISAYGEGNERRLTGKHETASIDQFSWGVANRGCSIRVGRDTEAKGKGYLEDRRPASNMDPYIVTSLLAETTLLWEPTLEAEALAAQKLSLNV.

A chloroplast and mitochondrion-targeting transit peptide spans 1–45 (MAQILAASPTCQMRVPKHSSVIASSSKLWSSVVLKQKKQSNNKVR). A GS beta-grasp domain is found at 77–157 (IIAEYIWIGG…VICDTWTPAG (81 aa)). Residues 97 to 122 (TIEKPVEDPSELPKWNYDGSSTGQAP) form a disordered region. Ser106 carries the post-translational modification Phosphoserine. One can recognise a GS catalytic domain in the interval 161-430 (PTNKRAKAAE…LAAQKLSLNV (270 aa)).

This sequence belongs to the glutamine synthetase family. Homooctamer. Expressed in mesophyll and epidermal cells of leaves.

Its subcellular location is the plastid. It localises to the chloroplast. The protein resides in the mitochondrion. The enzyme catalyses L-glutamate + NH4(+) + ATP = L-glutamine + ADP + phosphate + H(+). Its function is as follows. The light-modulated chloroplast/mitochondrial enzyme, encoded by a nuclear gene and expressed primarily in leaves, is responsible for the reassimilation of the ammonia generated by photorespiration. The chain is Glutamine synthetase, chloroplastic/mitochondrial (GLN2) from Arabidopsis thaliana (Mouse-ear cress).